A 370-amino-acid polypeptide reads, in one-letter code: Cytochrome b (370 aa).

The next 4 helical transmembrane spans lie at 25–45 (FGSMLLACSTLQVMTGFFLAV), 69–90 (WLMQNLHAIGASMFFICIYIHI), 105–125 (WLSGTTLLIMLMATAFFGYVL), and 170–190 (FFALHFILPFGIISLSSLHIM). Heme b is bound by residues histidine 75 and histidine 89. The heme b site is built by histidine 174 and histidine 188. Histidine 193 provides a ligand contact to a ubiquinone. 4 helical membrane-spanning segments follow: residues 218–238 (YKDLLMLTMMTTLLLMIVSFF), 280–300 (LGGALALTMSIMILLTVPFTH), 312–332 (FMQLMFWTFAATFLVITWTAT), and 339–358 (FTTISQVAALMYFMFFISNP).

This sequence belongs to the cytochrome b family. The cytochrome bc1 complex contains 3 respiratory subunits (MT-CYB, CYC1 and UQCRFS1), 2 core proteins (UQCRC1 and UQCRC2) and probably 6 low-molecular weight proteins. It depends on heme b as a cofactor.

It is found in the mitochondrion inner membrane. Component of the ubiquinol-cytochrome c reductase complex (complex III or cytochrome b-c1 complex) that is part of the mitochondrial respiratory chain. The b-c1 complex mediates electron transfer from ubiquinol to cytochrome c. Contributes to the generation of a proton gradient across the mitochondrial membrane that is then used for ATP synthesis. This Chilabothrus fordii (Ford's boa) protein is Cytochrome b (MT-CYB).